A 591-amino-acid chain; its full sequence is Glutathione S-transferase T2 (591 aa).

The GST N-terminal domain maps to 1-82; the sequence is MKLKVYADRM…YLSSAYASVV (82 aa). Glutathione contacts are provided by residues 11–12, 40–41, 53–54, and 66–67; these read SQ, QL, KV, and ES. One can recognise a GST C-terminal domain in the interval 89–226; that stretch reads DLSKRAKIHS…EVLFRAKDRF (138 aa). Residues 229–272 form a disordered region; the sequence is QREMATASKPGPQSKIIQFSSIGGTSDGPNLVQDTTDRKARRRK. Residues 243 to 262 are compositionally biased toward polar residues; sequence KIIQFSSIGGTSDGPNLVQD. Residues 265 to 338 enclose the Myb-like domain; the sequence is DRKARRRKWS…HCRQRWRKIN (74 aa).

Belongs to the GST superfamily. Theta family.

The protein localises to the peroxisome. It catalyses the reaction RX + glutathione = an S-substituted glutathione + a halide anion + H(+). Functionally, may be involved in the conjugation of reduced glutathione to a wide number of exogenous and endogenous hydrophobic electrophiles and have a detoxification role against certain herbicides. The polypeptide is Glutathione S-transferase T2 (GSTT2) (Arabidopsis thaliana (Mouse-ear cress)).